A 61-amino-acid polypeptide reads, in one-letter code: Small ribosomal subunit protein uS14 (61 aa).

Residues cysteine 24, cysteine 27, cysteine 40, and cysteine 43 each coordinate Zn(2+).

It belongs to the universal ribosomal protein uS14 family. Zinc-binding uS14 subfamily. In terms of assembly, part of the 30S ribosomal subunit. Contacts proteins S3 and S10. Zn(2+) serves as cofactor.

Binds 16S rRNA, required for the assembly of 30S particles and may also be responsible for determining the conformation of the 16S rRNA at the A site. In Trichlorobacter lovleyi (strain ATCC BAA-1151 / DSM 17278 / SZ) (Geobacter lovleyi), this protein is Small ribosomal subunit protein uS14.